The following is a 59-amino-acid chain: Ribosome biogenesis protein Nop10 (59 aa).

It belongs to the NOP10 family.

In terms of biological role, involved in ribosome biogenesis; more specifically in 18S rRNA pseudouridylation and in cleavage of pre-rRNA. The sequence is that of Ribosome biogenesis protein Nop10 from Thermococcus gammatolerans (strain DSM 15229 / JCM 11827 / EJ3).